Reading from the N-terminus, the 419-residue chain is Serine hydroxymethyltransferase (419 aa).

(6S)-5,6,7,8-tetrahydrofolate contacts are provided by residues L118 and 122–124 (GHL). N6-(pyridoxal phosphate)lysine is present on K226. E242 serves as a coordination point for (6S)-5,6,7,8-tetrahydrofolate.

Belongs to the SHMT family. Homodimer. Requires pyridoxal 5'-phosphate as cofactor.

The protein resides in the cytoplasm. It carries out the reaction (6R)-5,10-methylene-5,6,7,8-tetrahydrofolate + glycine + H2O = (6S)-5,6,7,8-tetrahydrofolate + L-serine. Its pathway is one-carbon metabolism; tetrahydrofolate interconversion. It participates in amino-acid biosynthesis; glycine biosynthesis; glycine from L-serine: step 1/1. Catalyzes the reversible interconversion of serine and glycine with tetrahydrofolate (THF) serving as the one-carbon carrier. This reaction serves as the major source of one-carbon groups required for the biosynthesis of purines, thymidylate, methionine, and other important biomolecules. Also exhibits THF-independent aldolase activity toward beta-hydroxyamino acids, producing glycine and aldehydes, via a retro-aldol mechanism. The sequence is that of Serine hydroxymethyltransferase from Metamycoplasma arthritidis (strain 158L3-1) (Mycoplasma arthritidis).